The following is a 697-amino-acid chain: Elongation factor G (697 aa).

The region spanning 8 to 283 (ERCRNIGIMA…AVVDYLPSPL (276 aa)) is the tr-type G domain. Residues 17-24 (AHIDAGKT), 81-85 (DTPGH), and 135-138 (NKID) each bind GTP.

It belongs to the TRAFAC class translation factor GTPase superfamily. Classic translation factor GTPase family. EF-G/EF-2 subfamily.

Its subcellular location is the cytoplasm. Its function is as follows. Catalyzes the GTP-dependent ribosomal translocation step during translation elongation. During this step, the ribosome changes from the pre-translocational (PRE) to the post-translocational (POST) state as the newly formed A-site-bound peptidyl-tRNA and P-site-bound deacylated tRNA move to the P and E sites, respectively. Catalyzes the coordinated movement of the two tRNA molecules, the mRNA and conformational changes in the ribosome. The chain is Elongation factor G from Koribacter versatilis (strain Ellin345).